An 887-amino-acid polypeptide reads, in one-letter code: Phosphatidylinositol 3-kinase catalytic subunit type 3 (887 aa).

A C2 PI3K-type domain is found at 35 to 184 (YKAVLEDPML…LAKLTKAHRQ (150 aa)). The disordered stretch occupies residues 149 to 170 (VEADGSEPTRTPGRTSSTLSED). Residues 156-170 (PTRTPGRTSSTLSED) are compositionally biased toward polar residues. Thr-163 is modified (phosphothreonine; by AMPK). A Phosphoserine; by AMPK modification is found at Ser-165. Phosphoserine is present on residues Ser-244, Ser-261, and Ser-282. One can recognise a PIK helical domain in the interval 283–520 (DHDLKPNATT…PKTHEMYLNV (238 aa)). The tract at residues 415-466 (LEPTKKDSQTSASESLSNSGVSSGDIDSSQIITNPLPPVASPPPASKAKEVS) is disordered. Residues 425 to 437 (SASESLSNSGVSS) show a composition bias toward low complexity. A compositionally biased stretch (pro residues) spans 449-459 (PLPPVASPPPA). The PI3K/PI4K catalytic domain maps to 605 to 871 (IPETATLFKS…LIDESVHALF (267 aa)). The tract at residues 611–617 (LFKSALM) is G-loop. Residues 740 to 748 (GVGDRHLDN) form a catalytic loop region. The tract at residues 759 to 780 (HIDFGYILGRDPKPLPPPMKLN) is activation loop.

This sequence belongs to the PI3/PI4-kinase family. As to quaternary structure, component of the PI3K (PI3KC3/PI3K-III/class III phosphatidylinositol 3-kinase) complex the core of which is composed of the catalytic subunit PIK3C3, the regulatory subunit PIK3R4 and BECN1 associating with additional regulatory/auxiliary subunits to form alternative complex forms. Alternative complex forms containing a fourth regulatory subunit in a mutually exclusive manner are: the PI3K complex I (PI3KC3-C1) containing ATG14, and the PI3K complex II (PI3KC3-C2) containing UVRAG. PI3KC3-C1 displays a V-shaped architecture with PIK3R4 serving as a bridge between PIK3C3 and the ATG14:BECN1 subcomplex. Both, PI3KC3-C1 and PI3KC3-C2, can associate with further regulatory subunits such as RUBCN, SH3GLB1/Bif-1 and AMBRA1. PI3KC3-C1 probably associates with PIK3CB. Interacts with RAB7A in the presence of PIK3R4. Interacts with AMBRA1. Interacts with BECN1P1/BECN2. Interacts with SLAMF1. May be a component of a complex composed of RAB5A (in GDP-bound form), DYN2 and PIK3C3. Interacts with NCKAP1L. Interacts with ATG14; this interaction is increased in the absence of TMEM39A. Interacts with STEEP1; the interaction is STING1-dependent and required for trafficking of STING1 from the endoplasmic reticulum. Interacts with YWHAG. Interacts with ARMC3. Mn(2+) serves as cofactor. In terms of processing, ubiquitinated via 'Lys-29'- and 'Lys-48'-linked ubiquitination by UBE3C, promoting its degradation. Deubiquitination by ZRANB1/TRABID promotes its stabilization, leading to autophagosome maturation.

The protein localises to the midbody. It localises to the late endosome. Its subcellular location is the cytoplasmic vesicle. It is found in the autophagosome. It carries out the reaction a 1,2-diacyl-sn-glycero-3-phospho-(1D-myo-inositol) + ATP = a 1,2-diacyl-sn-glycero-3-phospho-(1D-myo-inositol-3-phosphate) + ADP + H(+). In terms of biological role, catalytic subunit of the PI3K complex that mediates formation of phosphatidylinositol 3-phosphate; different complex forms are believed to play a role in multiple membrane trafficking pathways: PI3KC3-C1 is involved in initiation of autophagosomes and PI3KC3-C2 in maturation of autophagosomes and endocytosis. As part of PI3KC3-C1, promotes endoplasmic reticulum membrane curvature formation prior to vesicle budding. Involved in regulation of degradative endocytic trafficking and required for the abscission step in cytokinesis, probably in the context of PI3KC3-C2. Involved in the transport of lysosomal enzyme precursors to lysosomes. Required for transport from early to late endosomes. This chain is Phosphatidylinositol 3-kinase catalytic subunit type 3, found in Mus musculus (Mouse).